The primary structure comprises 202 residues: MPGQQRRGGGSGGSDRRERRDRSGGGPAQEKTAYVERVVAINRVAKVVKGGRRFSFTALVVVGDADGTVGVGYGKAKEVPAAIAKGVEEAKKHFFKVPRIGSTIPHPVQGEEAAGVVLLKPASPGTGVIAGGPVRAVLECAGVHDVLSKSLGSSNPINIVHATVAALRGLMRPEEIAARRGLPLEDVAPPAMLRARAAGVGA.

A compositionally biased stretch (gly residues) spans 1 to 13 (MPGQQRRGGGSGG). The segment at 1–31 (MPGQQRRGGGSGGSDRRERRDRSGGGPAQEK) is disordered. Residues 14–23 (SDRRERRDRS) show a composition bias toward basic and acidic residues. Residues 34-97 (YVERVVAINR…EEAKKHFFKV (64 aa)) enclose the S5 DRBM domain.

This sequence belongs to the universal ribosomal protein uS5 family. Part of the 30S ribosomal subunit. Contacts proteins S4 and S8.

Its function is as follows. With S4 and S12 plays an important role in translational accuracy. Functionally, located at the back of the 30S subunit body where it stabilizes the conformation of the head with respect to the body. In Parafrankia sp. (strain EAN1pec), this protein is Small ribosomal subunit protein uS5.